A 156-amino-acid polypeptide reads, in one-letter code: Small ribosomal subunit protein uS7 (156 aa).

Belongs to the universal ribosomal protein uS7 family. In terms of assembly, part of the 30S ribosomal subunit. Contacts proteins S9 and S11.

Its function is as follows. One of the primary rRNA binding proteins, it binds directly to 16S rRNA where it nucleates assembly of the head domain of the 30S subunit. Is located at the subunit interface close to the decoding center, probably blocks exit of the E-site tRNA. This chain is Small ribosomal subunit protein uS7, found in Picosynechococcus sp. (strain ATCC 27264 / PCC 7002 / PR-6) (Agmenellum quadruplicatum).